The primary structure comprises 197 residues: Phospholipid hydroperoxide glutathione peroxidase (197 aa).

Residue S40 is modified to Phosphoserine. U73 is a catalytic residue. U73 is a non-standard amino acid (selenocysteine).

It belongs to the glutathione peroxidase family. As to quaternary structure, monomer. Has a tendency to form higher mass oligomers. Interacts with FUNDC1; this interaction promotes GPX4 recruitment into mitochondria through TOM/TIM complex where it is degraded by mitophagy.

Its subcellular location is the mitochondrion. It localises to the cytoplasm. The catalysed reaction is a hydroperoxy polyunsaturated fatty acid + 2 glutathione = a hydroxy polyunsaturated fatty acid + glutathione disulfide + H2O. The enzyme catalyses 2 glutathione + H2O2 = glutathione disulfide + 2 H2O. It carries out the reaction tert-butyl hydroperoxide + 2 glutathione = tert-butanol + glutathione disulfide + H2O. It catalyses the reaction cumene hydroperoxide + 2 glutathione = 2-phenylpropan-2-ol + glutathione disulfide + H2O. The catalysed reaction is (9S)-hydroperoxy-(10E,12Z)-octadecadienoate + 2 glutathione = (9S)-hydroxy-(10E,12Z)-octadecadienoate + glutathione disulfide + H2O. The enzyme catalyses (13S)-hydroperoxy-(9Z,11E)-octadecadienoate + 2 glutathione = (13S)-hydroxy-(9Z,11E)-octadecadienoate + glutathione disulfide + H2O. It carries out the reaction (5S)-hydroperoxy-(6E,8Z,11Z,14Z)-eicosatetraenoate + 2 glutathione = (5S)-hydroxy-(6E,8Z,11Z,14Z)-eicosatetraenoate + glutathione disulfide + H2O. It catalyses the reaction (12R)-hydroperoxy-(5Z,8Z,10E,14Z)-eicosatetraenoate + 2 glutathione = (12R)-hydroxy-(5Z,8Z,10E,14Z)-eicosatetraenoate + glutathione disulfide + H2O. The catalysed reaction is (12S)-hydroperoxy-(5Z,8Z,10E,14Z)-eicosatetraenoate + 2 glutathione = (12S)-hydroxy-(5Z,8Z,10E,14Z)-eicosatetraenoate + glutathione disulfide + H2O. The enzyme catalyses (15S)-hydroperoxy-(5Z,8Z,11Z,13E)-eicosatetraenoate + 2 glutathione = (15S)-hydroxy-(5Z,8Z,11Z,13E)-eicosatetraenoate + glutathione disulfide + H2O. It carries out the reaction (5S)-hydroperoxy-(6E,8Z,11Z,14Z,17Z)-eicosapentaenoate + 2 glutathione = (5S)-hydroxy-(6E,8Z,11Z,14Z,17Z)-eicosapentaenoate + glutathione disulfide + H2O. It catalyses the reaction (12S)-hydroperoxy-(5Z,8Z,10E,14Z,17Z)-eicosapentaenoate + 2 glutathione = (12S)-hydroxy-(5Z,8Z,10E,14Z,17Z)-eicosapentaenoate + glutathione disulfide + H2O. The catalysed reaction is (15S)-hydroperoxy-(5Z,8Z,11Z,13E,17Z)-eicosapentaenoate + 2 glutathione = (15S)-hydroxy-(5Z,8Z,11Z,13E,17Z)-eicosapentaenoate + glutathione disulfide + H2O. The enzyme catalyses (15S)-hydroperoxy-(11Z,13E)-eicosadienoate + 2 glutathione = (15S)-hydroxy-(11Z,13E)-eicosadienoate + glutathione disulfide + H2O. It carries out the reaction (17S)-hydroperoxy-(4Z,7Z,10Z,13Z,15E,19Z)-docosahexaenoate + 2 glutathione = (17S)-hydroxy-(4Z,7Z,10Z,13Z,15E,19Z)-docosahexaenoate + glutathione disulfide + H2O. It catalyses the reaction a hydroperoxy-1,2-diacyl-glycero-3-phosphocholine + 2 glutathione = a hydroxy-1,2-diacyl-glycero-3-phosphocholine + glutathione disulfide + H2O. Its function is as follows. Essential antioxidant peroxidase that directly reduces phospholipid hydroperoxide even if they are incorporated in membranes and lipoproteins. Can also reduce fatty acid hydroperoxide, cholesterol hydroperoxide and thymine hydroperoxide. Plays a key role in protecting cells from oxidative damage by preventing membrane lipid peroxidation. Required to prevent cells from ferroptosis, a non-apoptotic cell death resulting from an iron-dependent accumulation of lipid reactive oxygen species. The presence of selenocysteine (Sec) versus Cys at the active site is essential for life: it provides resistance to overoxidation and prevents cells against ferroptosis. The presence of Sec at the active site is also essential for the survival of a specific type of parvalbumin-positive interneurons, thereby preventing against fatal epileptic seizures. May be required to protect cells from the toxicity of ingested lipid hydroperoxides. Required for normal sperm development and male fertility. Essential for maturation and survival of photoreceptor cells. Plays a role in a primary T-cell response to viral and parasitic infection by protecting T-cells from ferroptosis and by supporting T-cell expansion. Plays a role of glutathione peroxidase in platelets in the arachidonic acid metabolism. Reduces hydroperoxy ester lipids formed by a 15-lipoxygenase that may play a role as down-regulator of the cellular 15-lipoxygenase pathway. Can also reduce small soluble hydroperoxides such as H2O2, cumene hydroperoxide and tert-butyl hydroperoxide. The chain is Phospholipid hydroperoxide glutathione peroxidase from Bos taurus (Bovine).